Reading from the N-terminus, the 200-residue chain is Phospholipase A2 inhibitor LNF1 (200 aa).

An N-terminal signal peptide occupies residues Met-1–Ser-19. 8 disulfide bridges follow: Cys-22/Cys-46, Cys-25/Cys-32, Cys-39/Cys-67, Cys-73/Cys-94, Cys-95/Cys-100, Cys-118/Cys-143, Cys-136/Cys-165, and Cys-169/Cys-191. Asn-176 carries N-linked (GlcNAc...) asparagine glycosylation.

Belongs to the CNF-like-inhibitor family. In terms of assembly, occurs as a mixture of oligomers. Tetrameric arrangement appears to be the predominant quaternary structure. In terms of tissue distribution, expressed by the liver.

The protein localises to the secreted. Inhibits the enzymatic activity of phospholipase A2 (PA2). In Lachesis muta muta (Bushmaster), this protein is Phospholipase A2 inhibitor LNF1.